A 247-amino-acid chain; its full sequence is Fibroblast growth factor 14 (247 aa).

Disordered stretches follow at residues 1–38 (MAAAIASGLIRQKRQAREQHWDRPSASRRRSSPSKNRG) and 216–247 (ETVPKAGVTPSKSTSASAIMNGGKPVNKCKTT). The span at 15 to 25 (QAREQHWDRPS) shows a compositional bias: basic and acidic residues.

This sequence belongs to the heparin-binding growth factors family. In terms of assembly, interacts with SCN8A.

The protein resides in the nucleus. In terms of biological role, probably involved in nervous system development and function. The polypeptide is Fibroblast growth factor 14 (Fgf14) (Rattus norvegicus (Rat)).